Reading from the N-terminus, the 985-residue chain is Bifunctional glutamine synthetase adenylyltransferase/adenylyl-removing enzyme (985 aa).

Residues 1–472 (MTSSAPGNAD…HYARLFEGDP (472 aa)) form an adenylyl removase region. The tract at residues 477-985 (SLPPVNYGAG…RRVFTSLLEE (509 aa)) is adenylyl transferase.

It belongs to the GlnE family. It depends on Mg(2+) as a cofactor.

The enzyme catalyses [glutamine synthetase]-O(4)-(5'-adenylyl)-L-tyrosine + phosphate = [glutamine synthetase]-L-tyrosine + ADP. It catalyses the reaction [glutamine synthetase]-L-tyrosine + ATP = [glutamine synthetase]-O(4)-(5'-adenylyl)-L-tyrosine + diphosphate. Functionally, involved in the regulation of glutamine synthetase GlnA, a key enzyme in the process to assimilate ammonia. When cellular nitrogen levels are high, the C-terminal adenylyl transferase (AT) inactivates GlnA by covalent transfer of an adenylyl group from ATP to specific tyrosine residue of GlnA, thus reducing its activity. Conversely, when nitrogen levels are low, the N-terminal adenylyl removase (AR) activates GlnA by removing the adenylyl group by phosphorolysis, increasing its activity. The regulatory region of GlnE binds the signal transduction protein PII (GlnB) which indicates the nitrogen status of the cell. The protein is Bifunctional glutamine synthetase adenylyltransferase/adenylyl-removing enzyme of Bradyrhizobium sp. (strain BTAi1 / ATCC BAA-1182).